Here is a 332-residue protein sequence, read N- to C-terminus: Isopentenyl phosphate kinase (332 aa).

An N-acetylmethionine modification is found at methionine 1. 18 to 22 contributes to the ATP binding site; sequence KLGGA. Substrate is bound at residue alanine 96. Glycine 97 lines the ATP pocket. Positions 101 and 202 each coordinate substrate. Residues aspartate 223, 228-233, glycine 279, and lysine 283 contribute to the ATP site; that span reads YDRPPS.

Belongs to the isopentenyl phosphate kinase family.

The protein localises to the cytoplasm. It localises to the cytosol. The enzyme catalyses isopentenyl phosphate + ATP = isopentenyl diphosphate + ADP. Its function is as follows. Catalyzes the formation of isopentenyl diphosphate (IPP), the universal five-carbon isoprenoid building block of all natural isoprenoids. Acts in parallel with the mevalonate (MVA) pathway and plays an important role in regulating the formation of both MVA and methylerythritol phosphate (MEP) pathway-derived terpenoid compounds by controlling the ratio of isopentenyl phosphate (IP) and dimethylallyl phosphate (DMAP) to isopentenyl diphosphate (IPP) and dimethylallyl diphosphate (DMAPP). Controls the levels of IP and DMAP that are competitive inhibitors of the farnesyl diphosphate synthase. Regulates the production of farnesyl diphosphate-derived terpenoids in the cytosol, and geranyl diphosphate-derived compounds in plastids. The protein is Isopentenyl phosphate kinase of Arabidopsis thaliana (Mouse-ear cress).